A 266-amino-acid chain; its full sequence is Non-structural maintenance of chromosomes element 1 homolog (266 aa).

The interaction with NSMCE3 stretch occupies residues 1–102 (MQGSTRRMGV…SISKMATDFA (102 aa)). The RING-type; atypical zinc-finger motif lies at 191–232 (CNICHSLLIQGQSCETCGIRMHLPCVAKYFQSNAEPRCPHCN). Positions 246-266 (EKERESGVLKSNKKSLRSRQH) are disordered. A Phosphoserine modification is found at S251. Over residues 256–266 (SNKKSLRSRQH) the composition is skewed to basic residues.

The protein belongs to the NSE1 family. In terms of assembly, component of the SMC5-SMC6 complex which consists at least of SMC5, SMC6, NSMCE2, NSMCE1, NSMCE4A or EID3 and NSMCE3. NSMCE1, NSMCE4A or EID3 and NSMCE3 probably form a subcomplex that bridges the head domains of the SMC5-SMC6 heterodimer. Interacts with NSMCE3. Interacts with MAGEF1. Ubiquitinated.

It is found in the nucleus. The protein resides in the chromosome. Its subcellular location is the telomere. The enzyme catalyses S-ubiquitinyl-[E2 ubiquitin-conjugating enzyme]-L-cysteine + [acceptor protein]-L-lysine = [E2 ubiquitin-conjugating enzyme]-L-cysteine + N(6)-ubiquitinyl-[acceptor protein]-L-lysine.. In terms of biological role, RING-type zinc finger-containing E3 ubiquitin ligase that assembles with melanoma antigen protein (MAGE) to catalyze the direct transfer of ubiquitin from E2 ubiquitin-conjugating enzyme to a specific substrate. Within MAGE-RING ubiquitin ligase complex, MAGE stimulates and specifies ubiquitin ligase activity likely through recruitment and/or stabilization of the E2 ubiquitin-conjugating enzyme at the E3:substrate complex. Involved in maintenance of genome integrity, DNA damage response and DNA repair. NSMCE3/MAGEG1 and NSMCE1 ubiquitin ligase are components of SMC5-SMC6 complex and may positively regulate homologous recombination-mediated DNA repair. MAGEF1-NSMCE1 ubiquitin ligase promotes proteasomal degradation of MMS19, a key component of the cytosolic iron-sulfur protein assembly (CIA) machinery. Down-regulation of MMS19 impairs the activity of several DNA repair and metabolism enzymes such as ERCC2/XPD, FANCJ, RTEL1 and POLD1 that require iron-sulfur clusters as cofactors. The sequence is that of Non-structural maintenance of chromosomes element 1 homolog from Homo sapiens (Human).